The primary structure comprises 325 residues: Glutarate 2-hydroxylase (325 aa).

3 residues coordinate Fe cation: His-160, Asp-162, and His-292.

Belongs to the glutarate hydroxylase family. Homotetramer. Requires Fe(2+) as cofactor.

It carries out the reaction glutarate + 2-oxoglutarate + O2 = (S)-2-hydroxyglutarate + succinate + CO2. Its pathway is amino-acid degradation. Functionally, acts as an alpha-ketoglutarate-dependent dioxygenase catalyzing hydroxylation of glutarate (GA) to L-2-hydroxyglutarate (L2HG). Functions in a L-lysine degradation pathway that proceeds via cadaverine, glutarate and L-2-hydroxyglutarate. The protein is Glutarate 2-hydroxylase of Escherichia coli (strain 55989 / EAEC).